Here is a 232-residue protein sequence, read N- to C-terminus: Small ribosomal subunit protein uS2 (232 aa).

It belongs to the universal ribosomal protein uS2 family.

In Desulforamulus reducens (strain ATCC BAA-1160 / DSM 100696 / MI-1) (Desulfotomaculum reducens), this protein is Small ribosomal subunit protein uS2.